A 691-amino-acid polypeptide reads, in one-letter code: MPVRFRGLSEYKRNFRWKTPELCSPSQEQKSPWAGLRSDQLGITREPNFISKRRVPYHNPQISKSFEWTGDCDSDDPVETEALKTAESLAEHSNDVNQENTETPEGPRLPPKVRSHSSDSGVETALALAGNSMKKTPPVAPPNQKEAFVSPKKEAEKVNNGLHRVLQRKGGMNTPHLSTFPRNSEYQSQFVWKSPHEKSPILAAEEALYNTKREELIQKPAEDASKQEKSEQKHPKRKNKQHISQKPLSLHTHRGKMNTEYRSKFLSPAQYFYKDGAWSRIRSKVPNQASQNPLNSMWYMEVRELRARAKAYRQRIEGTHFSRYHLNQLLSDNNSLWDVSSNSSSEEGISNDIRALDLAGVSEKETAPRPKMLQQPGSREQSHQDDTEKKGLSDAPTVPVKRRLVWGEQEGTAEKDSQQLREEEEKENEQAAVVTQNLEKNNEGINEDNRIEGENTCLPNSPAAVSESSSVSSEPGGRLPTPKLRALGRAQRTHHDLTTPAVGGAVLVSPPKFKSSTSQQRMRSLGTDPSSVGQGAREASQRRSFRPGAKLKAVSLLTSPPAGLGTVDPLPLRQDQWHPNGVSGETVAINSAYQERSSTPPVLKSTKNRPMPCWSPSPRIQGTLKDPEFQHNGNVGNPKMGSFQLPLQERNYNNEDDRLSQISARSAASSSLASQILERAQKRKEDFWGKT.

An ST]-E-Y-X(3)-F motif 1; required for efficient microtubule binding and stabilization motif is present at residues 9–15 (SEYKRNF). Residues 87–155 (ESLAEHSNDV…EAFVSPKKEA (69 aa)) are disordered. The ST]-E-Y-X(3)-F motif 2; required for efficient microtubule binding and stabilization signature appears at 184–190 (SEYQSQF). Residues 219–233 (KPAEDASKQEKSEQK) are compositionally biased toward basic and acidic residues. Positions 219–254 (KPAEDASKQEKSEQKHPKRKNKQHISQKPLSLHTHR) are disordered. A compositionally biased stretch (basic residues) spans 234–243 (HPKRKNKQHI). Residues 259–265 (TEYRSKF) carry the ST]-E-Y-X(3)-F motif 3; required for efficient microtubule binding and stabilization motif. Disordered stretches follow at residues 360–552 (GVSE…AKLK) and 594–658 (QERS…EDDR). Basic and acidic residues-rich tracts occupy residues 380–392 (EQSH…KKGL) and 412–423 (TAEKDSQQLREE). A coiled-coil region spans residues 411–445 (GTAEKDSQQLREEEEKENEQAAVVTQNLEKNNEGI). The segment covering 461–475 (SPAAVSESSSVSSEP) has biased composition (low complexity). Positions 514–533 (KSSTSQQRMRSLGTDPSSVG) are enriched in polar residues.

This sequence belongs to the MDM1 family.

The protein resides in the nucleus. It is found in the cytoplasm. It localises to the cytoskeleton. Its subcellular location is the microtubule organizing center. The protein localises to the centrosome. The protein resides in the centriole. Microtubule-binding protein that negatively regulates centriole duplication. Binds to and stabilizes microtubules. The polypeptide is Nuclear protein MDM1 (MDM1) (Gallus gallus (Chicken)).